Consider the following 144-residue polypeptide: Large ribosomal subunit protein uL15 (144 aa).

The segment at 1 to 54 (MRLNTLSPAPGRVTSRKRVGRGIGSGLGKTAGRGHKGLKSRSGGTVKPGFEGGQ) is disordered. Residues 21-31 (RGIGSGLGKTA) show a composition bias toward gly residues.

Belongs to the universal ribosomal protein uL15 family. As to quaternary structure, part of the 50S ribosomal subunit.

Its function is as follows. Binds to the 23S rRNA. The polypeptide is Large ribosomal subunit protein uL15 (Teredinibacter turnerae (strain ATCC 39867 / T7901)).